Reading from the N-terminus, the 144-residue chain is Large ribosomal subunit protein uL11 (144 aa).

The protein belongs to the universal ribosomal protein uL11 family. As to quaternary structure, part of the ribosomal stalk of the 50S ribosomal subunit. Interacts with L10 and the large rRNA to form the base of the stalk. L10 forms an elongated spine to which L12 dimers bind in a sequential fashion forming a multimeric L10(L12)X complex. One or more lysine residues are methylated.

In terms of biological role, forms part of the ribosomal stalk which helps the ribosome interact with GTP-bound translation factors. The sequence is that of Large ribosomal subunit protein uL11 from Gluconobacter oxydans (strain 621H) (Gluconobacter suboxydans).